The chain runs to 1374 residues: DNA-directed RNA polymerase subunit beta (1374 aa).

It belongs to the RNA polymerase beta chain family. The RNAP catalytic core consists of 2 alpha, 1 beta, 1 beta' and 1 omega subunit. When a sigma factor is associated with the core the holoenzyme is formed, which can initiate transcription.

The catalysed reaction is RNA(n) + a ribonucleoside 5'-triphosphate = RNA(n+1) + diphosphate. In terms of biological role, DNA-dependent RNA polymerase catalyzes the transcription of DNA into RNA using the four ribonucleoside triphosphates as substrates. The polypeptide is DNA-directed RNA polymerase subunit beta (Methylobacterium radiotolerans (strain ATCC 27329 / DSM 1819 / JCM 2831 / NBRC 15690 / NCIMB 10815 / 0-1)).